A 465-amino-acid polypeptide reads, in one-letter code: Putative multidrug resistance protein MdtD (465 aa).

13 helical membrane-spanning segments follow: residues 12–32 (LWIVAFGFFMQTLDTTIVNTA), 49–69 (SVIVSYVLTVAVMLPASGWLA), 72–92 (IGVKWVFFSAIILFTFGSLMC), 102–124 (ILSRVLQGVGGAMMVPVGRLTVM), 138–158 (FVTLPGQIGPLVGPALGGFLV), 165–185 (WIFLINLPVGVIGALATLLLM), 195–215 (FDISGFIMLAIGMATLTLALD), 219–239 (GLGLSPLAIAGLILCGVIALG), 267–287 (LVGSMSARIGSGMLPFMTPIF), 290–310 (IGLGFSPFHAGLMMIPMIIGS), 342–362 (LSLPLVAIMGWTLLMPVVLFF), 393–413 (LLSMAMQLSMSIGVSTAGILL), and 430–450 (SAFLYSYLCMAIIIALPALIF).

This sequence belongs to the major facilitator superfamily. TCR/Tet family.

It is found in the cell inner membrane. The sequence is that of Putative multidrug resistance protein MdtD from Yersinia pseudotuberculosis serotype O:1b (strain IP 31758).